The following is a 649-amino-acid chain: Replication protein E1 (649 aa).

Positions 87–89 match the Nuclear localization signal motif; it reads KRK. A phosphoserine; by host mark is found at S93 and S107. Positions 106 to 115 match the Nuclear export signal motif; sequence ISPRLKAICI. The interval 186-352 is DNA-binding region; that stretch reads ICQTPLTNIL…QTVLQHSFND (167 aa). The 151-residue stretch at 451–601 folds into the SF3 helicase domain; it reads VEFMSFLTAL…FPFDENGNPV (151 aa). 477–484 provides a ligand contact to ATP; that stretch reads GAANTGKS. K558 participates in a covalent cross-link: Glycyl lysine isopeptide (Lys-Gly) (interchain with G-Cter in SUMO). Residues 624-649 are disordered; that stretch reads EDEDKENDGDSLPTFKCVSGQNTNTL.

This sequence belongs to the papillomaviridae E1 protein family. As to quaternary structure, can form hexamers. Interacts with E2 protein; this interaction increases E1 DNA binding specificity. Interacts with host DNA polymerase subunit POLA2. Interacts with host single stranded DNA-binding protein RPA1. Interacts with host TOP1; this interaction stimulates the enzymatic activity of TOP1. Phosphorylated. Post-translationally, sumoylated.

The protein localises to the host nucleus. The catalysed reaction is Couples ATP hydrolysis with the unwinding of duplex DNA by translocating in the 3'-5' direction.. It catalyses the reaction ATP + H2O = ADP + phosphate + H(+). Functionally, ATP-dependent DNA 3'-5' helicase required for initiation of viral DNA replication. It forms a complex with the viral E2 protein. The E1-E2 complex binds to the replication origin which contains binding sites for both proteins. During the initial step, a dimer of E1 interacts with a dimer of protein E2 leading to a complex that binds the viral origin of replication with high specificity. Then, a second dimer of E1 displaces the E2 dimer in an ATP-dependent manner to form the E1 tetramer. Following this, two E1 monomers are added to each half of the site, which results in the formation of two E1 trimers on the viral ori. Subsequently, two hexamers will be created. The double hexamer acts as a bi-directional helicase machinery and unwinds the viral DNA and then recruits the host DNA polymerase to start replication. This Human papillomavirus type 16 protein is Replication protein E1.